We begin with the raw amino-acid sequence, 384 residues long: Probable L-tyrosine/L-aspartate decarboxylase (384 aa).

N6-(pyridoxal phosphate)lysine is present on K233.

The protein belongs to the group II decarboxylase family. MfnA subfamily. Requires pyridoxal 5'-phosphate as cofactor.

The enzyme catalyses L-tyrosine + H(+) = tyramine + CO2. It catalyses the reaction L-aspartate + H(+) = beta-alanine + CO2. It functions in the pathway cofactor biosynthesis; methanofuran biosynthesis. It participates in cofactor biosynthesis; coenzyme A biosynthesis. Functionally, catalyzes the decarboxylation of L-tyrosine to produce tyramine for methanofuran biosynthesis. Can also catalyze the decarboxylation of L-aspartate to produce beta-alanine for coenzyme A (CoA) biosynthesis. The chain is Probable L-tyrosine/L-aspartate decarboxylase from Methanococcus maripaludis (strain DSM 14266 / JCM 13030 / NBRC 101832 / S2 / LL).